The primary structure comprises 545 residues: Probable protein kinase UbiB (545 aa).

Residues 123 to 501 form the Protein kinase domain; sequence DFDIVPLASA…RVRQHQSHYL (379 aa). ATP contacts are provided by residues 129–137 and K152; that span reads LASASIAQV. D287 acts as the Proton acceptor in catalysis. Transmembrane regions (helical) follow at residues 498–518 and 521–541; these read SHYLFGVGATLLLSGTAVVLS and EWDGLAAGLIAAGVVAWLVGW.

The protein belongs to the ABC1 family. UbiB subfamily.

The protein localises to the cell inner membrane. Its pathway is cofactor biosynthesis; ubiquinone biosynthesis [regulation]. Is probably a protein kinase regulator of UbiI activity which is involved in aerobic coenzyme Q (ubiquinone) biosynthesis. The sequence is that of Probable protein kinase UbiB from Erwinia tasmaniensis (strain DSM 17950 / CFBP 7177 / CIP 109463 / NCPPB 4357 / Et1/99).